Consider the following 170-residue polypeptide: Acetyl-CoA decarbonylase/synthase complex subunit epsilon 1 (170 aa).

This sequence belongs to the CdhB family. As to quaternary structure, heterotetramer of two alpha and two epsilon subunits. The ACDS complex is made up of alpha, epsilon, beta, gamma and delta subunits with a probable stoichiometry of (alpha(2)epsilon(2))(4)-beta(8)-(gamma(1)delta(1))(8).

Its pathway is one-carbon metabolism; methanogenesis from acetate. Part of a complex that catalyzes the reversible cleavage of acetyl-CoA, allowing growth on acetate as sole source of carbon and energy. The alpha-epsilon subcomponent functions as a carbon monoxide dehydrogenase. The precise role of the epsilon subunit is unclear; it may have a stabilizing role within the alpha(2)epsilon(2) component and/or be involved in electron transfer to FAD during a potential FAD-mediated CO oxidation. This is Acetyl-CoA decarbonylase/synthase complex subunit epsilon 1 (cdhB1) from Methanosarcina mazei (strain ATCC BAA-159 / DSM 3647 / Goe1 / Go1 / JCM 11833 / OCM 88) (Methanosarcina frisia).